We begin with the raw amino-acid sequence, 434 residues long: Histidine--tRNA ligase (434 aa).

The disordered stretch occupies residues 412–434 (DQTTVPVEAFPGDHDAPTYEDVV).

This sequence belongs to the class-II aminoacyl-tRNA synthetase family.

Its subcellular location is the cytoplasm. It catalyses the reaction tRNA(His) + L-histidine + ATP = L-histidyl-tRNA(His) + AMP + diphosphate + H(+). This Haloquadratum walsbyi (strain DSM 16790 / HBSQ001) protein is Histidine--tRNA ligase.